The sequence spans 187 residues: UPF0301 protein YqgE (187 aa).

It belongs to the UPF0301 (AlgH) family.

This chain is UPF0301 protein YqgE, found in Salmonella choleraesuis (strain SC-B67).